The primary structure comprises 1919 residues: Disks large homolog 5 (1919 aa).

A disordered region spans residues 98-142 (AEGAGSTYSVLSTMPSDSESSSSLSSVGTTGKAPSPPPLLTDQQV). Over residues 109–123 (STMPSDSESSSSLSS) the composition is skewed to low complexity. Ser-264 and Ser-295 each carry phosphoserine. Residues 383 to 599 (LNKATAQNKD…LEKEARFRQL (217 aa)) are a coiled coil. PDZ domains are found at residues 620-710 (VVEF…RRRK) and 705-796 (VVRR…LKVF). Position 900 is a phosphoserine (Ser-900). 5 disordered regions span residues 927-1122 (GVGE…FRPK), 1150-1187 (QEWAPYSPGHSSRHSNPPLYPSRPSVGTVPRSLTPSTT), 1201-1230 (SHRVGPCSSPPAARDAGPQGLHPSVQHQGR), 1245-1264 (EMRATHGSNSLPSSARLGSS), and 1271-1306 (AERIKIPSTPRYPRSVVGSERGSVSHSECSTPPQSP). Phosphothreonine is present on Thr-984. Ser-1000 is modified (phosphoserine). Position 1011 is a phosphothreonine (Thr-1011). Over residues 1017-1030 (RRSDSIKFQHRLET) the composition is skewed to basic and acidic residues. Position 1021 is a phosphoserine (Ser-1021). The segment covering 1045–1055 (TSPPSALPPDV) has biased composition (pro residues). Thr-1183 carries the phosphothreonine modification. 2 positions are modified to phosphoserine: Ser-1209 and Ser-1263. Composition is skewed to low complexity over residues 1252–1264 (SNSLPSSARLGSS) and 1284–1298 (RSVVGSERGSVSHSE). Ser-1334 is modified (phosphoserine). A PDZ 3 domain is found at 1350–1429 (HVKVQKGSEP…TITILAQYNP (80 aa)). The disordered stretch occupies residues 1434-1493 (LSSHSRSSSHLDPAGTHSTLQGSGTTTPEHPSVIDPLMEQDEGPSTPPAKQSSSRIAGDA). The span at 1449-1462 (THSTLQGSGTTTPE) shows a compositional bias: polar residues. Positions 1501–1582 (RVVFIKKSQL…GVRLKVQYRP (82 aa)) constitute a PDZ 4 domain. Residues 1593–1661 (GDSFYIRALY…PSKYVMDQEF (69 aa)) enclose the SH3 domain. Ser-1666 carries the phosphoserine modification. The Guanylate kinase-like domain maps to 1722–1905 (DSVSLAYQRV…ICTQILAMVN (184 aa)).

The protein belongs to the MAGUK family. In terms of assembly, interacts with MPP1. Interacts with CTNNB1 and with the third SH3 domain of SORBS3 to form a ternary complex. Interacts (via coiled-coil domain) with MARK3. Interacts (via PDZ domain 3) with STK3/MST2 and STK4/MST1. Interacts with SCRIB. Interacts with CTNB1, SMO and (via PDZ4 or guanylate kinase-like domain) with KIF7. Highly expressed in normal breast tissues and low-grade breast cancer tissues (at protein level). Highly expressed in the placenta and prostate. Expressed at a lower level in the thyroid, spinal cord, trachea, adrenal gland, skeletal muscle, pancreas, heart, brain, liver and kidney. A short splice product shows more limited expression, being absent from at least the brain.

The protein localises to the cell junction. Its subcellular location is the cell membrane. The protein resides in the postsynaptic density. It is found in the cytoplasm. It localises to the cytoskeleton. The protein localises to the cilium basal body. In terms of biological role, acts as a regulator of the Hippo signaling pathway. Negatively regulates the Hippo signaling pathway by mediating the interaction of MARK3 with STK3/4, bringing them together to promote MARK3-dependent hyperphosphorylation and inactivation of STK3 kinase activity toward LATS1. Positively regulates the Hippo signaling pathway by mediating the interaction of SCRIB with STK4/MST1 and LATS1 which is important for the activation of the Hippo signaling pathway. Involved in regulating cell proliferation, maintenance of epithelial polarity, epithelial-mesenchymal transition (EMT), cell migration and invasion. Plays an important role in dendritic spine formation and synaptogenesis in cortical neurons; regulates synaptogenesis by enhancing the cell surface localization of N-cadherin. Acts as a positive regulator of hedgehog (Hh) signaling pathway. Plays a critical role in the early point of the SMO activity cycle by interacting with SMO at the ciliary base to induce the accumulation of KIF7 and GLI2 at the ciliary tip for GLI2 activation. The chain is Disks large homolog 5 (DLG5) from Homo sapiens (Human).